A 641-amino-acid polypeptide reads, in one-letter code: Chaperone protein DnaK (641 aa).

Thr-201 carries the post-translational modification Phosphothreonine; by autocatalysis. Positions 604-622 (ASAEQGGAAPGADAGNAGK) are enriched in low complexity. A disordered region spans residues 604–625 (ASAEQGGAAPGADAGNAGKAQD).

Belongs to the heat shock protein 70 family.

Its function is as follows. Acts as a chaperone. This chain is Chaperone protein DnaK, found in Stenotrophomonas maltophilia (strain R551-3).